Consider the following 104-residue polypeptide: Large ribosomal subunit protein uL24 (104 aa).

The protein belongs to the universal ribosomal protein uL24 family. As to quaternary structure, part of the 50S ribosomal subunit.

Functionally, one of two assembly initiator proteins, it binds directly to the 5'-end of the 23S rRNA, where it nucleates assembly of the 50S subunit. One of the proteins that surrounds the polypeptide exit tunnel on the outside of the subunit. This is Large ribosomal subunit protein uL24 from Ectopseudomonas mendocina (strain ymp) (Pseudomonas mendocina).